A 396-amino-acid polypeptide reads, in one-letter code: Acetate kinase (396 aa).

Position 7 (N7) interacts with Mg(2+). K14 contacts ATP. R88 is a substrate binding site. The Proton donor/acceptor role is filled by D145. Residues 203–207 (HAGNG), 278–280 (DAR), and 326–330 (GIGEN) contribute to the ATP site. A Mg(2+)-binding site is contributed by E379.

This sequence belongs to the acetokinase family. As to quaternary structure, homodimer. Mg(2+) serves as cofactor. Requires Mn(2+) as cofactor.

Its subcellular location is the cytoplasm. The enzyme catalyses acetate + ATP = acetyl phosphate + ADP. It participates in metabolic intermediate biosynthesis; acetyl-CoA biosynthesis; acetyl-CoA from acetate: step 1/2. Its function is as follows. Catalyzes the formation of acetyl phosphate from acetate and ATP. Can also catalyze the reverse reaction. In Phytoplasma australiense, this protein is Acetate kinase.